The sequence spans 315 residues: Methionyl-tRNA formyltransferase (315 aa).

113–116 (SILP) provides a ligand contact to (6S)-5,6,7,8-tetrahydrofolate.

It belongs to the Fmt family.

It carries out the reaction L-methionyl-tRNA(fMet) + (6R)-10-formyltetrahydrofolate = N-formyl-L-methionyl-tRNA(fMet) + (6S)-5,6,7,8-tetrahydrofolate + H(+). Its function is as follows. Attaches a formyl group to the free amino group of methionyl-tRNA(fMet). The formyl group appears to play a dual role in the initiator identity of N-formylmethionyl-tRNA by promoting its recognition by IF2 and preventing the misappropriation of this tRNA by the elongation apparatus. The polypeptide is Methionyl-tRNA formyltransferase (Vibrio vulnificus (strain CMCP6)).